Consider the following 58-residue polypeptide: uncharacterized protein (58 aa).

This is an uncharacterized protein from Yersinia enterocolitica.